A 642-amino-acid chain; its full sequence is uncharacterized protein (642 aa).

Residues 1–15 (MVHITLGQAIWVSVK) are Cytoplasmic-facing. Residues 16–36 (PIIKIYLIIGVGFLMAKMGIL) traverse the membrane as a helical segment. Topologically, residues 37-42 (TVEATR) are extracellular. A helical transmembrane segment spans residues 43-63 (IISDIVLTVLLPSLSFNKIVA). At 64–73 (NIEDKDIKSV) the chain is on the cytoplasmic side. Residues 74–94 (GIICLSALLIFGSGFFFAYVV) traverse the membrane as a helical segment. Residues 95–104 (RLFLPVPKQW) lie on the Extracellular side of the membrane. The chain crosses the membrane as a helical span at residues 105–125 (YGGILAGGMFPNISDLPIAYL). The Cytoplasmic portion of the chain corresponds to 126-142 (QSMDQGLVFSEEEGNKG). The helical transmembrane segment at 143-163 (VANVIIFLTMFLICIFNLGGF) threads the bilayer. The Extracellular portion of the chain corresponds to 164–460 (RLIESDFEYN…FLKNCLRPCS (297 aa)). Disordered stretches follow at residues 183–206 (ETTK…RFFS) and 227–324 (GTKG…SQPR). 2 stretches are compositionally biased toward polar residues: residues 240-260 (RRST…NSKI) and 272-312 (IACT…SSID). Residues 461–481 (MAVIIALTVAFIPWVKALFVT) form a helical membrane-spanning segment. Residues 482–499 (TANTPHISQAPDNAPPLS) lie on the Cytoplasmic side of the membrane. A helical membrane pass occupies residues 500 to 520 (FFMDFTGYVGAACVPFGLILL). The Extracellular segment spans residues 521-538 (GATLGRLKIGNLYPGFWK). Residues 539-559 (AAVTLVILRQCVMPIFGVLWC) form a helical membrane-spanning segment. The Cytoplasmic segment spans residues 560–574 (DRLVKAGWVNWQDDR). Residues 575-595 (MLLFVIAISWNLPTMTTLIYF) form a helical membrane-spanning segment. Residues 596 to 614 (TASFTPPETTAPIQMECVS) lie on the Extracellular side of the membrane. The chain crosses the membrane as a helical span at residues 615–635 (FFLMLQYPLMVVSLPFLVSYF). Residues 636–642 (LKVQMNL) are Cytoplasmic-facing.

The protein belongs to the auxin efflux carrier (TC 2.A.69) family.

Its subcellular location is the membrane. This is an uncharacterized protein from Saccharomyces cerevisiae (strain ATCC 204508 / S288c) (Baker's yeast).